We begin with the raw amino-acid sequence, 610 residues long: Anthocyanin regulatory Lc protein (610 aa).

Disordered regions lie at residues A402–R422 and L468–T524. The bHLH domain maps to T412–L461. Polar residues predominate over residues T481–E495. Residues K508–R519 are compositionally biased toward basic and acidic residues.

Belongs to the bHLH protein family. As to quaternary structure, efficient DNA binding requires dimerization with another bHLH protein.

Its subcellular location is the nucleus. In terms of biological role, putative transcriptional activator. Controls tissue-specific synthesis of anthocyanin pigments in various parts of the maize plant. This Zea mays (Maize) protein is Anthocyanin regulatory Lc protein (LC).